The following is a 224-amino-acid chain: Adenosylcobinamide-GDP ribazoletransferase (224 aa).

Helical transmembrane passes span 21–41 (LSFKCVWALPYVAAPIIAAIP), 44–64 (LLYLGASPAIAYIALLAATGL), 97–117 (GGIFAVTAVVVTTAAHLHSPL), and 156–176 (WPAALPALAVLAYLAPVTTAV).

It belongs to the CobS family. The cofactor is Mg(2+).

It is found in the cell membrane. The catalysed reaction is alpha-ribazole + adenosylcob(III)inamide-GDP = adenosylcob(III)alamin + GMP + H(+). The enzyme catalyses alpha-ribazole 5'-phosphate + adenosylcob(III)inamide-GDP = adenosylcob(III)alamin 5'-phosphate + GMP + H(+). Its pathway is cofactor biosynthesis; adenosylcobalamin biosynthesis; adenosylcobalamin from cob(II)yrinate a,c-diamide: step 7/7. In terms of biological role, joins adenosylcobinamide-GDP and alpha-ribazole to generate adenosylcobalamin (Ado-cobalamin). Also synthesizes adenosylcobalamin 5'-phosphate from adenosylcobinamide-GDP and alpha-ribazole 5'-phosphate. In Pyrobaculum aerophilum (strain ATCC 51768 / DSM 7523 / JCM 9630 / CIP 104966 / NBRC 100827 / IM2), this protein is Adenosylcobinamide-GDP ribazoletransferase.